The sequence spans 294 residues: MLENLSTEHRNEKTMNLDEMSIKEVLQSMNEEDRTVALAVEKEIEHIEKVVRVVIQSFEEEGRLIYIGAGTSGRLGILDAVECPPTFGTDDKMVQGFIAGGLKAFTKAVEGAEDREELAEEDLKSIGLNEKDTVIGIAASGRTPYVIGGLKYAHSVGASTASISCNKNAEISKYAKLNVEVETGAEILTGSTRLKAGTAQKLVLNMISTASMIGVGKVYKNLMVDVQSTNEKLVERSKRIIVEATGVSYEVAAEHYEKAERNVKAAIVMVLLQCEYGEALEKLKVAKGFVKKAL.

The SIS domain maps to 54–217 (VIQSFEEEGR…STASMIGVGK (164 aa)). The Proton donor role is filled by Glu82. Glu113 is an active-site residue.

This sequence belongs to the GCKR-like family. MurNAc-6-P etherase subfamily. As to quaternary structure, homodimer.

It catalyses the reaction N-acetyl-D-muramate 6-phosphate + H2O = N-acetyl-D-glucosamine 6-phosphate + (R)-lactate. It functions in the pathway amino-sugar metabolism; N-acetylmuramate degradation. In terms of biological role, specifically catalyzes the cleavage of the D-lactyl ether substituent of MurNAc 6-phosphate, producing GlcNAc 6-phosphate and D-lactate. This Bacillus thuringiensis subsp. konkukian (strain 97-27) protein is N-acetylmuramic acid 6-phosphate etherase.